The following is a 330-amino-acid chain: Phosphate acyltransferase (330 aa).

It belongs to the PlsX family. As to quaternary structure, homodimer. Probably interacts with PlsY.

It is found in the cytoplasm. It catalyses the reaction a fatty acyl-[ACP] + phosphate = an acyl phosphate + holo-[ACP]. The protein operates within lipid metabolism; phospholipid metabolism. In terms of biological role, catalyzes the reversible formation of acyl-phosphate (acyl-PO(4)) from acyl-[acyl-carrier-protein] (acyl-ACP). This enzyme utilizes acyl-ACP as fatty acyl donor, but not acyl-CoA. The polypeptide is Phosphate acyltransferase (Streptococcus pneumoniae (strain P1031)).